The primary structure comprises 294 residues: ATP synthase gamma chain (294 aa).

The protein belongs to the ATPase gamma chain family. F-type ATPases have 2 components, CF(1) - the catalytic core - and CF(0) - the membrane proton channel. CF(1) has five subunits: alpha(3), beta(3), gamma(1), delta(1), epsilon(1). CF(0) has three main subunits: a, b and c.

It is found in the cell inner membrane. Functionally, produces ATP from ADP in the presence of a proton gradient across the membrane. The gamma chain is believed to be important in regulating ATPase activity and the flow of protons through the CF(0) complex. This is ATP synthase gamma chain from Nitrosomonas eutropha (strain DSM 101675 / C91 / Nm57).